The sequence spans 537 residues: MDCKVVSLNEKDQFIPKIKSSDPVITGLFQYDAAQQISFEKRMSKENNGREAALANVIREYMNDLKLSSEQELNIQHLANGSKVVIGGQQAGLFGGPLYTFHKIFSIITLSKELTDTHKQQVVPVFWIAGEDHDFDEVNHTFVYNENHGSLHKVKYHTMEMPETTVSRYYPDKAELKQTLKTMFIHMKETVHTQGLLEICDRIIDQYDSWTDMFKALLHETFKAYGVLFIDAQFEPLRKMEAPMFKKILKKHQLLDDAFRATQKRTQNQGLKAMIQTDTNVHLFLHDENMRQLVSYDGKHFRLNKTDKKYIKEEIINIAENQPELFSNNVVTRPLMEEWLFNTVAFIGGPSEIKYWAELKDVFELFDVEMPIVMPRLRITYLNDRIEKLLSKYNIPLEKVLVDGVEGERSKFIREQASDQFIEKVEGMIEQQRRLYQDLLDEVAGNQNNINLVNKNNEIHIQQYDYLLKRYLLNIERENDISMKQFREIQETLHPMGGLQERIWNPLQILNDFGTDVFKPSTYPPLSYTFDHIIIKP.

Residues 422-450 (IEKVEGMIEQQRRLYQDLLDEVAGNQNNI) are a coiled coil.

The protein belongs to the BshC family.

Its function is as follows. Involved in bacillithiol (BSH) biosynthesis. May catalyze the last step of the pathway, the addition of cysteine to glucosamine malate (GlcN-Mal) to generate BSH. The protein is Putative cysteine ligase BshC of Staphylococcus aureus (strain MRSA252).